A 564-amino-acid chain; its full sequence is Proline--tRNA ligase (564 aa).

The protein belongs to the class-II aminoacyl-tRNA synthetase family. ProS type 1 subfamily. In terms of assembly, homodimer.

It localises to the cytoplasm. It catalyses the reaction tRNA(Pro) + L-proline + ATP = L-prolyl-tRNA(Pro) + AMP + diphosphate. Its function is as follows. Catalyzes the attachment of proline to tRNA(Pro) in a two-step reaction: proline is first activated by ATP to form Pro-AMP and then transferred to the acceptor end of tRNA(Pro). As ProRS can inadvertently accommodate and process non-cognate amino acids such as alanine and cysteine, to avoid such errors it has two additional distinct editing activities against alanine. One activity is designated as 'pretransfer' editing and involves the tRNA(Pro)-independent hydrolysis of activated Ala-AMP. The other activity is designated 'posttransfer' editing and involves deacylation of mischarged Ala-tRNA(Pro). The misacylated Cys-tRNA(Pro) is not edited by ProRS. This is Proline--tRNA ligase from Bacillus subtilis (strain 168).